The following is a 362-amino-acid chain: Transcription factor bHLH128 (362 aa).

Residues 1 to 16 show a composition bias toward low complexity; the sequence is MYQSSSSTSSSSQRSS. 4 disordered regions span residues 1-23, 78-106, 120-140, and 162-184; these read MYQS…GGGL, SDST…SNKD, SQQH…YSLA, and LNQP…HSRL. A compositionally biased stretch (polar residues) spans 78–96; it reads SDSTTCGVNNSSDGQKQLG. The span at 162–173 shows a compositional bias: polar residues; sequence LNQPTSDYSPQG. Phosphoserine is present on Ser189. Residues 289–339 enclose the bHLH domain; sequence CATHPRSIAERERRTRISGKLKKLQDLVPNMDKQTSYSDMLDLAVQHIKGL.

Homodimer.

The protein resides in the nucleus. The polypeptide is Transcription factor bHLH128 (BHLH128) (Arabidopsis thaliana (Mouse-ear cress)).